A 395-amino-acid polypeptide reads, in one-letter code: NAC domain-containing protein 7 (395 aa).

One can recognise an NAC domain in the interval 7 to 156 (VPPGFRFHPT…GWVVCRVFKK (150 aa)). Residues 107-162 (IGMRKTLVFYKGRAPNGQKSDWIMHEYRLETDENGTPQEEGWVVCRVFKKRLAAVR) mediate DNA binding. 2 stretches are compositionally biased toward polar residues: residues 344 to 362 (AATA…SNAE) and 382 to 395 (TAST…DLWK). The tract at residues 344 to 395 (AATASASIQNNAKDTSNAEYQVDEEKDPKRASDMGEEYTASTSSSCQIDLWK) is disordered.

Belongs to the plant vascular related NAC-domain protein family. In terms of assembly, interacts with NAC083/VNI2. Expressed in root, shoot and hypocotyl vascular elements, columella root caps, epidermal and cortex root cells and root-hypocotyl junctions. Observed predominantly in root imature xylem vessels. Present in root developing xylems. Specifically expressed in vessels in the secondary xylem of the root-hypocotyl region, and in vessels but not in interfascicular fibers in stems.

The protein localises to the nucleus. Transcription activator that binds to the secondary wall NAC binding element (SNBE), 5'-(T/A)NN(C/T)(T/C/G)TNNNNNNNA(A/C)GN(A/C/T)(A/T)-3', in the promoter of target genes. Involved in xylem formation by promoting the expression of secondary wall-associated transcription factors and of genes involved in secondary wall biosynthesis and programmed cell death, genes driven by the secondary wall NAC binding element (SNBE). Triggers thickening of secondary walls. The chain is NAC domain-containing protein 7 from Arabidopsis thaliana (Mouse-ear cress).